Consider the following 369-residue polypeptide: Dual-specificity RNA methyltransferase RlmN (369 aa).

E94 acts as the Proton acceptor in catalysis. Positions 113–346 (ESEKWTMCLS…CTIRESRGID (234 aa)) constitute a Radical SAM core domain. A disulfide bond links C120 and C351. [4Fe-4S] cluster contacts are provided by C127, C131, and C134. S-adenosyl-L-methionine-binding positions include 177-178 (GE), S209, 232-234 (SLH), and N308. C351 (S-methylcysteine intermediate) is an active-site residue.

It belongs to the radical SAM superfamily. RlmN family. The cofactor is [4Fe-4S] cluster.

The protein localises to the cytoplasm. The enzyme catalyses adenosine(2503) in 23S rRNA + 2 reduced [2Fe-2S]-[ferredoxin] + 2 S-adenosyl-L-methionine = 2-methyladenosine(2503) in 23S rRNA + 5'-deoxyadenosine + L-methionine + 2 oxidized [2Fe-2S]-[ferredoxin] + S-adenosyl-L-homocysteine. It catalyses the reaction adenosine(37) in tRNA + 2 reduced [2Fe-2S]-[ferredoxin] + 2 S-adenosyl-L-methionine = 2-methyladenosine(37) in tRNA + 5'-deoxyadenosine + L-methionine + 2 oxidized [2Fe-2S]-[ferredoxin] + S-adenosyl-L-homocysteine. Its function is as follows. Specifically methylates position 2 of adenine 2503 in 23S rRNA and position 2 of adenine 37 in tRNAs. m2A2503 modification seems to play a crucial role in the proofreading step occurring at the peptidyl transferase center and thus would serve to optimize ribosomal fidelity. The sequence is that of Dual-specificity RNA methyltransferase RlmN from Helicobacter hepaticus (strain ATCC 51449 / 3B1).